Consider the following 309-residue polypeptide: Porphobilinogen deaminase (309 aa).

An S-(dipyrrolylmethanemethyl)cysteine modification is found at Cys-241.

It belongs to the HMBS family. Monomer. The cofactor is dipyrromethane.

The enzyme catalyses 4 porphobilinogen + H2O = hydroxymethylbilane + 4 NH4(+). Its pathway is porphyrin-containing compound metabolism; protoporphyrin-IX biosynthesis; coproporphyrinogen-III from 5-aminolevulinate: step 2/4. Functionally, tetrapolymerization of the monopyrrole PBG into the hydroxymethylbilane pre-uroporphyrinogen in several discrete steps. In Oceanobacillus iheyensis (strain DSM 14371 / CIP 107618 / JCM 11309 / KCTC 3954 / HTE831), this protein is Porphobilinogen deaminase.